Reading from the N-terminus, the 138-residue chain is Large ribosomal subunit protein bL17 (138 aa).

Belongs to the bacterial ribosomal protein bL17 family. As to quaternary structure, part of the 50S ribosomal subunit. Contacts protein L32.

This chain is Large ribosomal subunit protein bL17, found in Methylorubrum populi (strain ATCC BAA-705 / NCIMB 13946 / BJ001) (Methylobacterium populi).